The following is a 213-amino-acid chain: Probable nicotinate-nucleotide adenylyltransferase (213 aa).

It belongs to the NadD family.

The catalysed reaction is nicotinate beta-D-ribonucleotide + ATP + H(+) = deamido-NAD(+) + diphosphate. It functions in the pathway cofactor biosynthesis; NAD(+) biosynthesis; deamido-NAD(+) from nicotinate D-ribonucleotide: step 1/1. Catalyzes the reversible adenylation of nicotinate mononucleotide (NaMN) to nicotinic acid adenine dinucleotide (NaAD). This Escherichia coli O45:K1 (strain S88 / ExPEC) protein is Probable nicotinate-nucleotide adenylyltransferase.